Here is a 354-residue protein sequence, read N- to C-terminus: UDP-N-acetylglucosamine--N-acetylmuramyl-(pentapeptide) pyrophosphoryl-undecaprenol N-acetylglucosamine transferase (354 aa).

Residues 11-13 (TAG), Arg-164, Ser-194, and Gln-289 each bind UDP-N-acetyl-alpha-D-glucosamine.

It belongs to the glycosyltransferase 28 family. MurG subfamily.

It is found in the cell membrane. The enzyme catalyses di-trans,octa-cis-undecaprenyl diphospho-N-acetyl-alpha-D-muramoyl-L-alanyl-D-glutamyl-meso-2,6-diaminopimeloyl-D-alanyl-D-alanine + UDP-N-acetyl-alpha-D-glucosamine = di-trans,octa-cis-undecaprenyl diphospho-[N-acetyl-alpha-D-glucosaminyl-(1-&gt;4)]-N-acetyl-alpha-D-muramoyl-L-alanyl-D-glutamyl-meso-2,6-diaminopimeloyl-D-alanyl-D-alanine + UDP + H(+). Its pathway is cell wall biogenesis; peptidoglycan biosynthesis. Cell wall formation. Catalyzes the transfer of a GlcNAc subunit on undecaprenyl-pyrophosphoryl-MurNAc-pentapeptide (lipid intermediate I) to form undecaprenyl-pyrophosphoryl-MurNAc-(pentapeptide)GlcNAc (lipid intermediate II). The sequence is that of UDP-N-acetylglucosamine--N-acetylmuramyl-(pentapeptide) pyrophosphoryl-undecaprenol N-acetylglucosamine transferase from Clostridium botulinum (strain Loch Maree / Type A3).